The chain runs to 475 residues: Probable dolichyl pyrophosphate Man9GlcNAc2 alpha-1,3-glucosyltransferase (475 aa).

The next 8 helical transmembrane spans lie at 114–133, 161–181, 235–255, 296–316, 322–342, 385–405, 418–438, and 441–461; these read VVSA…AYSL, GHFQ…AAIL, AVVL…LQAV, MALV…VLLF, VGFL…SFQV, LLVP…CFDS, IANI…TVPA, and KYPD…FFLF.

The protein belongs to the ALG6/ALG8 glucosyltransferase family.

It is found in the endoplasmic reticulum membrane. The catalysed reaction is an alpha-D-Man-(1-&gt;2)-alpha-D-Man-(1-&gt;2)-alpha-D-Man-(1-&gt;3)-[alpha-D-Man-(1-&gt;2)-alpha-D-Man-(1-&gt;3)-[alpha-D-Man-(1-&gt;2)-alpha-D-Man-(1-&gt;6)]-alpha-D-Man-(1-&gt;6)]-beta-D-Man-(1-&gt;4)-beta-D-GlcNAc-(1-&gt;4)-alpha-D-GlcNAc-diphospho-di-trans,poly-cis-dolichol + a di-trans,poly-cis-dolichyl beta-D-glucosyl phosphate = an alpha-D-Glc-(1-&gt;3)-alpha-D-Man-(1-&gt;2)-alpha-D-Man-(1-&gt;2)-alpha-D-Man-(1-&gt;3)-[alpha-D-Man-(1-&gt;2)-alpha-D-Man-(1-&gt;3)-[alpha-D-Man-(1-&gt;2)-alpha-D-Man-(1-&gt;6)]-alpha-D-Man-(1-&gt;6)]-beta-D-Man-(1-&gt;4)-beta-D-GlcNAc-(1-&gt;4)-alpha-D-GlcNAc-diphospho-di-trans,poly-cis-dolichol + a di-trans,poly-cis-dolichyl phosphate + H(+). Its pathway is protein modification; protein glycosylation. Its function is as follows. Adds the first glucose residue to the lipid-linked oligosaccharide precursor for N-linked glycosylation. Transfers glucose from dolichyl phosphate glucose (Dol-P-Glc) onto the lipid-linked oligosaccharide Man(9)GlcNAc(2)-PP-Dol. Involved in cuticle differentiation. The sequence is that of Probable dolichyl pyrophosphate Man9GlcNAc2 alpha-1,3-glucosyltransferase (gny) from Drosophila melanogaster (Fruit fly).